A 2718-amino-acid polypeptide reads, in one-letter code: E3 SUMO-protein ligase RanBP2 (2718 aa).

Positions 1–100 (MFTTRKEVDA…DPRQSEVVID (100 aa)) are sufficient for interaction with Hsp83. Residues 1-200 (MFTTRKEVDA…EKMKIDQAFN (200 aa)) form a sufficient for interaction with piwi region. 2 TPR repeats span residues 26–58 (DIKG…VRDD) and 59–94 (AVGH…DPRQ). Disordered regions lie at residues 796-816 (QQDR…VHNN) and 937-959 (EHQQ…HPVV). Residues 803 to 816 (GIDNSFGSPDVHNN) are compositionally biased toward polar residues. Residues 808–809 (FG) form repeat 1. The segment at 808 to 2581 (FGSPDVHNNS…GEENETKLFG (1774 aa)) is 27 X 2 AA repeats of F-G. Residues 938 to 948 (HQQQQQHQQQQ) show a composition bias toward low complexity. 3 repeat units span residues 1028–1029 (FG), 1035–1036 (FG), and 1104–1105 (FG). Residues 1181–1208 (QPVEKEPPANVVITSSDPLPKPTTASVQ) are disordered. The span at 1192–1208 (VITSSDPLPKPTTASVQ) shows a compositional bias: polar residues. Residues 1252–1253 (FG) form repeat 5. 2 disordered regions span residues 1263-1314 (FKTQ…KPII) and 1483-1502 (NKPQ…ATAA). A compositionally biased stretch (polar residues) spans 1284-1299 (NQSGATDPNKTLPQDT). A RanBD1 1 domain is found at 1309–1445 (DFKPIIPLPD…FTKASEAAKS (137 aa)). Residues 1483 to 1493 (NKPQEQTKTQP) show a composition bias toward polar residues. 4 consecutive repeat copies span residues 1506–1507 (FG), 1539–1540 (FG), 1547–1548 (FG), and 1552–1553 (FG). The RanBD1 2 domain maps to 1605 to 1742 (QFVPVIALPD…VQKAQQSIGN (138 aa)). Residues 1738–1761 (QSIGNEPKKEEVPSAAGEKEKPIK) form a disordered region. A compositionally biased stretch (basic and acidic residues) spans 1743–1760 (EPKKEEVPSAAGEKEKPI). Repeat 10 spans residues 1763–1764 (FG). The RanBP2-type 1 zinc-finger motif lies at 1770 to 1799 (KAGSWNCQACYTNNGQDQLYCLACQEPKDA). A run of 4 repeats spans residues 1826–1827 (FG), 1842–1843 (FG), 1874–1875 (FG), and 1883–1884 (FG). Residues 1890-1919 (AVGSWSCSACYVNNPGESLYCSACDAPKND) form a RanBP2-type 2 zinc finger. Tandem repeats lie at residues 1942-1943 (FG) and 1944-1945 (FG). Disordered regions lie at residues 1981–2021 (FTFS…TYFS), 2154–2204 (EDSP…THEV), and 2239–2273 (SLSR…KDAG). Positions 2002 to 2016 (EDEDNDSQEVEEEEN) are enriched in acidic residues. Residues 2019–2151 (YFSPVIPLPD…IKNALNETAK (133 aa)) form the RanBD1 3 domain. A compositionally biased stretch (polar residues) spans 2161–2175 (SVSQSTEANKPSQKN). Residues 2239 to 2257 (SLSRNNSSASEASKTPSSA) show a composition bias toward low complexity. Repeat copies occupy residues 2260–2261 (FG), 2313–2314 (FG), 2332–2333 (FG), 2352–2353 (FG), 2360–2361 (FG), 2366–2367 (FG), 2393–2394 (FG), 2399–2400 (FG), 2415–2416 (FG), 2421–2422 (FG), and 2580–2581 (FG). Residues 2320–2346 (AEQQKKDSSESVFGGNKADSQSPATQE) form a disordered region. Residues 2556–2699 (HYDAIVELPD…VNSCIKRAKA (144 aa)) form the RanBD1 4 domain.

Belongs to the RanBP2 E3 ligase family. Part of the nuclear pore complex. Forms a complex with Nxt1, sbr/Nxf1 and RanGAP. Interacts (via TPR repeats) with Hsp83; the interaction is required for the nuclear import of the sesquiterpenoid juvenile hormone receptor Met. Interacts (via N-terminus) with piwi. In terms of tissue distribution, expressed in both oocytes and nurse cells (at protein level).

It localises to the nucleus. Its subcellular location is the nuclear pore complex. Its function is as follows. E3 SUMO-protein ligase. Component of the nuclear pore complex (NPC), a complex required for trafficking across the nuclear envelope. Required for nuclear import of nuclear localization signal (NLS)-containing proteins in an importin alpha/importin beta-dependent manner, but also for the nuclear import of specific proteins such as phosphorylated Mad or the sesquiterpenoid juvenile hormone receptor Met as part of the juvenile hormone signal transduction pathway. Plays a role in nuclear mRNA export by recruiting the mRNA transport complex composed of Nxt1 and sbr/Nxf1 to the NPC. Essential during germline development for transposon silencing and piRNA biogenesis probably by regulating piwi localization to the nucleus. During oogenesis, required to form granules that modulate the biogenesis of annulate lamellae containing nuclear pore complex components. The polypeptide is E3 SUMO-protein ligase RanBP2 (Drosophila melanogaster (Fruit fly)).